The chain runs to 182 residues: Ribosome-recycling factor (182 aa).

Belongs to the RRF family.

Its subcellular location is the cytoplasm. Its function is as follows. Responsible for the release of ribosomes from messenger RNA at the termination of protein biosynthesis. May increase the efficiency of translation by recycling ribosomes from one round of translation to another. In Synechocystis sp. (strain ATCC 27184 / PCC 6803 / Kazusa), this protein is Ribosome-recycling factor.